Reading from the N-terminus, the 714-residue chain is Structure-specific endonuclease subunit SLX4 2 (714 aa).

Composition is skewed to basic and acidic residues over residues 1–14 and 24–34; these read MSPE…EDNL and IHEETLAEESH. Disordered regions lie at residues 1-114 and 338-369; these read MSPE…EQQG and SSGP…KTPQ. Residues 36 to 46 show a composition bias toward polar residues; that stretch reads QAIQRSISRLS. Basic residues predominate over residues 79-92; sequence KTKKRKLKVSKPRK.

This sequence belongs to the SLX4 family. Forms a heterodimer with SLX1. Post-translationally, phosphorylated in response to DNA damage.

The protein resides in the nucleus. Functionally, regulatory subunit of the SLX1-SLX4 structure-specific endonuclease that resolves DNA secondary structures generated during DNA repair and recombination. Has endonuclease activity towards branched DNA substrates, introducing single-strand cuts in duplex DNA close to junctions with ss-DNA. In Candida tropicalis (strain ATCC MYA-3404 / T1) (Yeast), this protein is Structure-specific endonuclease subunit SLX4 2.